The chain runs to 157 residues: 2-C-methyl-D-erythritol 2,4-cyclodiphosphate synthase (157 aa).

D8 and H10 together coordinate a divalent metal cation. 4-CDP-2-C-methyl-D-erythritol 2-phosphate contacts are provided by residues 8–10 (DVH) and 34–35 (HS). H42 is a binding site for a divalent metal cation. Residues 56–58 (DIG), 132–135 (TTNE), and R142 each bind 4-CDP-2-C-methyl-D-erythritol 2-phosphate.

Belongs to the IspF family. As to quaternary structure, homotrimer. A divalent metal cation serves as cofactor.

The catalysed reaction is 4-CDP-2-C-methyl-D-erythritol 2-phosphate = 2-C-methyl-D-erythritol 2,4-cyclic diphosphate + CMP. The protein operates within isoprenoid biosynthesis; isopentenyl diphosphate biosynthesis via DXP pathway; isopentenyl diphosphate from 1-deoxy-D-xylulose 5-phosphate: step 4/6. Its function is as follows. Involved in the biosynthesis of isopentenyl diphosphate (IPP) and dimethylallyl diphosphate (DMAPP), two major building blocks of isoprenoid compounds. Catalyzes the conversion of 4-diphosphocytidyl-2-C-methyl-D-erythritol 2-phosphate (CDP-ME2P) to 2-C-methyl-D-erythritol 2,4-cyclodiphosphate (ME-CPP) with a corresponding release of cytidine 5-monophosphate (CMP). The protein is 2-C-methyl-D-erythritol 2,4-cyclodiphosphate synthase of Chlorobium luteolum (strain DSM 273 / BCRC 81028 / 2530) (Pelodictyon luteolum).